The following is a 205-amino-acid chain: Guanylate kinase (205 aa).

Positions glycine 5–glutamate 184 constitute a Guanylate kinase-like domain. Glycine 12 to glycine 19 is an ATP binding site.

It belongs to the guanylate kinase family.

Its subcellular location is the cytoplasm. It carries out the reaction GMP + ATP = GDP + ADP. Essential for recycling GMP and indirectly, cGMP. The chain is Guanylate kinase from Listeria monocytogenes serotype 4b (strain F2365).